The primary structure comprises 517 residues: Synaptic vesicular amine transporter (517 aa).

The Cytoplasmic segment spans residues 1–20; sequence MALSDLVLLRWLRDSRHSRK. The chain crosses the membrane as a helical span at residues 21 to 41; it reads LILFIVFLALLLDNMLLTVVV. Residues 42 to 132 lie on the Extracellular side of the membrane; sequence PIIPSYLYSI…EDKDLLNENV (91 aa). N56, N83, N84, N91, and N113 each carry an N-linked (GlcNAc...) asparagine glycan. A disordered region spans residues 100-119; that stretch reads ESPKATTTQHTVTNTTVPPD. The segment covering 105–115 has biased composition (low complexity); it reads TTTQHTVTNTT. A disulfide bond links C120 and C327. The helical transmembrane segment at 133-153 threads the bilayer; the sequence is QVGLLFASKATVQLLTNPFIG. At 154-162 the chain is on the cytoplasmic side; that stretch reads LLTNRIGYP. A helical transmembrane segment spans residues 163-183; the sequence is IPMFAGFCIMFISTVMFAFSS. Over 184-192 the chain is Extracellular; the sequence is SYAFLLIAR. Residues 193–213 traverse the membrane as a helical segment; that stretch reads SLQGIGSSCSSVAGMGMLASV. Over 214 to 222 the chain is Cytoplasmic; sequence YTDDEERGN. Residues 223-245 traverse the membrane as a helical segment; sequence AMGIALGGLAMGVLVGPPFGSVL. Serotonin contacts are provided by L231 and V235. At 246–251 the chain is on the extracellular side; it reads YEFVGK. Residues 252–274 traverse the membrane as a helical segment; it reads TAPFLVLAALVLLDGAIQLFVLQ. The Cytoplasmic portion of the chain corresponds to 275–294; the sequence is PSRVQPESQKGTPLTTLLKD. A helical transmembrane segment spans residues 295–314; sequence PYILIAAGSICFANMGIAML. The serotonin site is built by N308, I311, E315, F337, and Y344. The Extracellular portion of the chain corresponds to 315 to 331; the sequence is EPALPIWMMETMCSRKW. The chain crosses the membrane as a helical span at residues 332–355; it reads QLGVAFLPASISYLIGTNIFGILA. Residues 356–360 are Cytoplasmic-facing; the sequence is HKMGR. A helical membrane pass occupies residues 361–381; it reads WLCALLGMIVVGISILCIPFA. The Extracellular portion of the chain corresponds to 382–392; that stretch reads KNIYGLIAPNF. Residues 393-413 traverse the membrane as a helical segment; sequence GVGFAIGMVDSSMMPIMGYLV. Residue D402 participates in serotonin binding. The Cytoplasmic segment spans residues 414-417; that stretch reads DLRH. A helical transmembrane segment spans residues 418–438; sequence VSVYGSVYAIADVAFCMGYAI. Y436 is a binding site for serotonin. The Extracellular portion of the chain corresponds to 439-443; it reads GPSAG. A helical transmembrane segment spans residues 444-465; that stretch reads GAIAKAIGFPWLMTIIGIIDIV. The Cytoplasmic segment spans residues 466–517; sequence FAPLCFFLRSPPAKEEKMAILMDHNCPIKTKMYTQNNVQPYPVGDDEESESD. S514 and S516 each carry phosphoserine; by CK2.

Belongs to the major facilitator superfamily. Vesicular transporter family. In terms of assembly, interacts with SLC6A3. In terms of tissue distribution, expressed in striata and substantia nigra.

The protein localises to the cytoplasmic vesicle. It is found in the secretory vesicle. Its subcellular location is the synaptic vesicle membrane. The protein resides in the secretory vesicle membrane. It localises to the cell projection. The protein localises to the axon. It is found in the dendrite. It carries out the reaction serotonin(in) + 2 H(+)(out) = serotonin(out) + 2 H(+)(in). It catalyses the reaction dopamine(in) + 2 H(+)(out) = dopamine(out) + 2 H(+)(in). The catalysed reaction is histamine(in) + 2 H(+)(out) = histamine(out) + 2 H(+)(in). With respect to regulation, strongly inhibited by reserpine and tetrabenazine. Also inhibited to a lesser extent by ketanserin and fenfluramine. Reserpine and ketanserin inhibit by blocking the substrate-binding pocket. Tetrabenazine traps SLC18A2/VMAT2 in an occluded conformation and its inhibition is specific to SLC18A2/VMAT2 but not SLC18A1/VMAT1. In terms of biological role, electrogenic antiporter that exchanges one cationic monoamine with two intravesicular protons across the membrane of secretory and synaptic vesicles. Uses the electrochemical proton gradient established by the V-type proton-pump ATPase to accumulate high concentrations of monoamines inside the vesicles prior to their release via exocytosis. Transports a variety of catecholamines such as dopamine, adrenaline and noradrenaline, histamine, and indolamines such as serotonin. Regulates the transvesicular monoaminergic gradient that determines the quantal size. Mediates somatodendritic dopamine release in hippocampal neurons, likely as part of a regulated secretory pathway that integrates retrograde synaptic signals. Acts as a primary transporter for striatal dopamine loading ensuring impulse-dependent release of dopamine at the synaptic cleft. Responsible for histamine and serotonin storage and subsequent corelease from mast cell granules. This Mus musculus (Mouse) protein is Synaptic vesicular amine transporter (Slc18a2).